The sequence spans 92 residues: UPF0250 protein XF_1271 (92 aa).

This sequence belongs to the UPF0250 family.

The polypeptide is UPF0250 protein XF_1271 (Xylella fastidiosa (strain 9a5c)).